Reading from the N-terminus, the 304-residue chain is Transcription factor BEE 2 (304 aa).

The tract at residues 74–132 is disordered; that stretch reads FHMEPVKNNGHSRAITLQNKRKPEGKTEKREKKKIKAEDETEPSMKGKSNMSNTETSSE. Over residues 82–91 the composition is skewed to polar residues; the sequence is NGHSRAITLQ. The segment covering 94 to 103 has biased composition (basic and acidic residues); sequence RKPEGKTEKR. Residues 120-132 show a composition bias toward polar residues; that stretch reads GKSNMSNTETSSE. The 51-residue stretch at 147-197 folds into the bHLH domain; it reads EATDRHSLAERARREKISKKMKCLQDIVPGCNKVTGKAGMLDEIINYVQSL.

Homodimer. Expressed in stems and flowers.

It localises to the nucleus. Its function is as follows. Positive regulator of brassinosteroid signaling. In Arabidopsis thaliana (Mouse-ear cress), this protein is Transcription factor BEE 2 (BEE2).